A 557-amino-acid chain; its full sequence is Aerobic glycerol-3-phosphate dehydrogenase (557 aa).

FAD is bound at residue 21 to 49 (DLVIIGGGITGAGIALDASERGMKVALVE).

This sequence belongs to the FAD-dependent glycerol-3-phosphate dehydrogenase family. The cofactor is FAD.

The protein localises to the cytoplasm. The enzyme catalyses a quinone + sn-glycerol 3-phosphate = dihydroxyacetone phosphate + a quinol. It participates in polyol metabolism; glycerol degradation via glycerol kinase pathway; glycerone phosphate from sn-glycerol 3-phosphate (aerobic route): step 1/1. The protein is Aerobic glycerol-3-phosphate dehydrogenase (glpD) of Staphylococcus aureus (strain MRSA252).